Consider the following 432-residue polypeptide: Glutamyl-tRNA reductase (432 aa).

Substrate is bound by residues T55–R58, S113, E118–Q120, and Q124. C56 serves as the catalytic Nucleophile. G193–I198 serves as a coordination point for NADP(+).

Belongs to the glutamyl-tRNA reductase family. Homodimer.

It catalyses the reaction (S)-4-amino-5-oxopentanoate + tRNA(Glu) + NADP(+) = L-glutamyl-tRNA(Glu) + NADPH + H(+). The protein operates within porphyrin-containing compound metabolism; protoporphyrin-IX biosynthesis; 5-aminolevulinate from L-glutamyl-tRNA(Glu): step 1/2. Its function is as follows. Catalyzes the NADPH-dependent reduction of glutamyl-tRNA(Glu) to glutamate 1-semialdehyde (GSA). The protein is Glutamyl-tRNA reductase of Paracidovorax citrulli (strain AAC00-1) (Acidovorax citrulli).